A 968-amino-acid polypeptide reads, in one-letter code: Chaperone protein ClpB3, chloroplastic (968 aa).

The N-terminal 67 residues, 1–67, are a transit peptide targeting the chloroplast; it reads MATATTTATA…RLDHRPFVVR (67 aa). The region spanning 78-222 is the Clp R domain; that stretch reads TQQEFTEMAW…KSAIESIRGK (145 aa). Repeat stretches follow at residues 82 to 147 and 159 to 222; these read FTEM…IQRQ and LGRD…IRGK. The i stretch occupies residues 237-485; the sequence is LEKYGKDLTA…KLKMEITSKP (249 aa). 282 to 289 is a binding site for ATP; the sequence is GEPGVGKT. Positions 488-606 form a coiled coil; the sequence is LDELDRSVIK…NEYLSSGKSM (119 aa). An II region spans residues 611–802; that stretch reads VLGSDIAEIV…VIIMTSNVGS (192 aa). Residue 685–692 coordinates ATP; that stretch reads GPTGVGKT.

It belongs to the ClpA/ClpB family.

Its subcellular location is the plastid. The protein resides in the chloroplast. Functionally, molecular chaperone essential for chloroplast development and seedling viability. Mediates internal thylakoid membrane formation and confers thermotolerance to chloroplasts during heat stress. This is Chaperone protein ClpB3, chloroplastic (CLPB3) from Arabidopsis thaliana (Mouse-ear cress).